A 430-amino-acid polypeptide reads, in one-letter code: 3-phosphoshikimate 1-carboxyvinyltransferase (430 aa).

Lysine 23, serine 24, and arginine 28 together coordinate 3-phosphoshikimate. Lysine 23 serves as a coordination point for phosphoenolpyruvate. Phosphoenolpyruvate contacts are provided by glycine 95 and arginine 123. Residues serine 169, glutamine 171, aspartate 315, and lysine 342 each contribute to the 3-phosphoshikimate site. Glutamine 171 is a phosphoenolpyruvate binding site. The active-site Proton acceptor is aspartate 315. Phosphoenolpyruvate is bound by residues arginine 346 and arginine 388.

This sequence belongs to the EPSP synthase family. In terms of assembly, monomer.

Its subcellular location is the cytoplasm. It catalyses the reaction 3-phosphoshikimate + phosphoenolpyruvate = 5-O-(1-carboxyvinyl)-3-phosphoshikimate + phosphate. Its pathway is metabolic intermediate biosynthesis; chorismate biosynthesis; chorismate from D-erythrose 4-phosphate and phosphoenolpyruvate: step 6/7. Catalyzes the transfer of the enolpyruvyl moiety of phosphoenolpyruvate (PEP) to the 5-hydroxyl of shikimate-3-phosphate (S3P) to produce enolpyruvyl shikimate-3-phosphate and inorganic phosphate. The chain is 3-phosphoshikimate 1-carboxyvinyltransferase from Streptococcus pyogenes serotype M1.